The sequence spans 100 residues: Integration host factor subunit alpha (100 aa).

The protein belongs to the bacterial histone-like protein family. In terms of assembly, heterodimer of an alpha and a beta chain.

In terms of biological role, this protein is one of the two subunits of integration host factor, a specific DNA-binding protein that functions in genetic recombination as well as in transcriptional and translational control. The protein is Integration host factor subunit alpha of Alcanivorax borkumensis (strain ATCC 700651 / DSM 11573 / NCIMB 13689 / SK2).